A 151-amino-acid polypeptide reads, in one-letter code: Neuroglobin (151 aa).

The region spanning 1 to 149 (MERPEPELIR…VVQAMSRGWD (149 aa)) is the Globin domain. Histidine 64 and histidine 96 together coordinate heme b.

It belongs to the globin family. Monomer. Homodimer and homotetramer; disulfide-linked. Mainly monomeric but also detected as part of homodimers and homotetramers. Interacts with 14-3-3 proteins; regulates the phosphorylation of NGB. Could interact (ferrous form) with G-alpha(i) proteins (GTP-bound form). Post-translationally, phosphorylated during hypoxia by ERK1/ERK2. Phosphorylation regulates the heme pocket hexacoordination preventing the association of His-64 with the heme metal center. Thereby, promotes the access of dioxygen and nitrite to the heme and stimulates the nitrite reductase activity. Phosphorylation during hypoxia is stabilized by 14-3-3 proteins.

The protein resides in the cytoplasm. Its subcellular location is the cytosol. It localises to the mitochondrion matrix. The enzyme catalyses Fe(III)-heme b-[protein] + nitric oxide + H2O = Fe(II)-heme b-[protein] + nitrite + 2 H(+). In terms of biological role, monomeric globin with a bis-histidyl six-coordinate heme-iron atom through which it can bind dioxygen, carbon monoxide and nitric oxide. Could help transport oxygen and increase its availability to the metabolically active neuronal tissues, though its low quantity in tissues as well as its high affinity for dioxygen, which may limit its oxygen-releasing ability, argue against it. The ferrous/deoxygenated form exhibits a nitrite reductase activity and it could produce nitric oxide which in turn inhibits cellular respiration in response to hypoxia. In its ferrous/deoxygenated state, it may also exhibit GDI (Guanine nucleotide Dissociation Inhibitor) activity toward heterotrimeric G-alpha proteins, thereby regulating signal transduction to facilitate neuroprotective responses in the wake of hypoxia and associated oxidative stress. The chain is Neuroglobin from Canis lupus familiaris (Dog).